The chain runs to 334 residues: DNA-directed RNA polymerase subunit alpha (334 aa).

The alpha N-terminal domain (alpha-NTD) stretch occupies residues 1-231 (MQSNTFLTPR…EQLSVFADLK (231 aa)). Residues 245-334 (IDPVLLRPVD…GKKDTSHAAP (90 aa)) are alpha C-terminal domain (alpha-CTD).

Belongs to the RNA polymerase alpha chain family. Homodimer. The RNAP catalytic core consists of 2 alpha, 1 beta, 1 beta' and 1 omega subunit. When a sigma factor is associated with the core the holoenzyme is formed, which can initiate transcription.

The enzyme catalyses RNA(n) + a ribonucleoside 5'-triphosphate = RNA(n+1) + diphosphate. DNA-dependent RNA polymerase catalyzes the transcription of DNA into RNA using the four ribonucleoside triphosphates as substrates. The sequence is that of DNA-directed RNA polymerase subunit alpha from Nitrosospira multiformis (strain ATCC 25196 / NCIMB 11849 / C 71).